The primary structure comprises 204 residues: E3 ubiquitin-protein ligase MPSR1 (204 aa).

An RING-type; atypical zinc finger spans residues 113–154 (CVICLEEWKSEETVKEMPCKHRFHGGCIEKWLGFHGSCPVCR).

Post-translationally, autoubiquitinated.

The protein resides in the cytoplasm. The catalysed reaction is S-ubiquitinyl-[E2 ubiquitin-conjugating enzyme]-L-cysteine + [acceptor protein]-L-lysine = [E2 ubiquitin-conjugating enzyme]-L-cysteine + N(6)-ubiquitinyl-[acceptor protein]-L-lysine.. In terms of biological role, E3 ubiquitin-protein ligase involved in protein quality control (PQC) under proteotoxic stress. Is essential to plant survival under proteotoxic stress. Functions by removing damaged proteins before they form cytotoxic aggregates. Recognizes misfolded proteins selectively and tethers polyubiquitin chains to the proteins directly for subsequent degradation by the 26S proteasome pathway. Targets misfolded proteins independently of cytoplasmic chaperones. Associates with the 26S proteasome and sustains the structural integrity of the proteasome complex at the initial stage of proteotoxic stress. Under normal conditions, MPSR1 becomes highly unstable by its autoubiquitination activity and is stabilized during proteotoxic stress by conjugating ubiquitins on misfolded proteins. This is E3 ubiquitin-protein ligase MPSR1 from Arabidopsis thaliana (Mouse-ear cress).